We begin with the raw amino-acid sequence, 652 residues long: Protein high chlorophyll fluorescent 107 (652 aa).

Disordered regions lie at residues 1–21 (MHFF…NTSS) and 78–121 (VFSP…EGKK). Residues 1–68 (MHFFFVPNSS…TFSSKNTYLY (68 aa)) constitute a chloroplast transit peptide. The segment covering 105–121 (PLLENSDKESSEEEGKK) has biased composition (basic and acidic residues). TPR repeat units lie at residues 168–201 (LDLS…WPED), 202–235 (GRPY…TQGE), 237–270 (SYIW…DKKH), 271–304 (VAAW…CGRN), 305–338 (EYIY…NSRS), 339–372 (CASW…SPKN), 374–406 (FAWH…NPRD), 407–440 (PVLL…DPRH), 441–474 (QPVW…DANT), 478–511 (SRCL…NSQS), 543–576 (TEVV…GQNN), and 598–631 (QQPE…DPLK). The disordered stretch occupies residues 585 to 610 (LRNMNRTKDSQSNQQPESSAGREDIE).

In terms of assembly, may form homomultimers. Part of a multi-subunit complex in the range of 60-190 and 600-800 kDa in chloroplast membranes.

Its subcellular location is the plastid. The protein resides in the chloroplast. The protein localises to the chloroplast membrane. It localises to the chloroplast stroma. Functionally, involved, directly or indirectly, in the processing of chloroplast encoded mRNAs. Exhibits sequence-specific RNA binding and RNA remodeling activities, probably leading to the activation of translation of the target gene cluster psbB-psbT-psbH-petB-petD. Blocks 5'-3' and 3'-5' exoribonucleases (e.g. polynucleotide phosphorylase (PNPase), RNase R) in vitro. Necessary for intercistronic RNA processing of the psbH 5' untranslated region or the stabilization of 5' processed psbH RNAs. Also required for the synthesis of psbB. The chain is Protein high chlorophyll fluorescent 107 from Arabidopsis thaliana (Mouse-ear cress).